The primary structure comprises 571 residues: Potassium-transporting ATPase potassium-binding subunit (571 aa).

The next 12 membrane-spanning stretches (helical) occupy residues 5–25 (LAAGLQVAFVLAVLAVAYVPV), 60–80 (YGYAGSVLGFSTASVLFLYAL), 86–106 (VLPLSGDLSGVSPAVAFNTAV), 131–151 (GLAVQNFVSAAVGMAVAVALI), 177–197 (ILLPFSFVIALILLSQGVIQS), 247–267 (PTPVSNIVEILAILLIPVSLT), 291–311 (LTLLAVMGILWGSLLAVTLAA), 334–354 (FGIPGTALFAVSTTGTSTGAV), 386–406 (GLYGILVLALIAVFVGGLLVG), 425–445 (ALSVLVMPALVLIGTGITVIL), 498–518 (ALGLCMLFGRFLPIIFVLALA), and 547–567 (GTVVLVAALTFFPALALGPIA).

It belongs to the KdpA family. The system is composed of three essential subunits: KdpA, KdpB and KdpC.

It localises to the cell membrane. In terms of biological role, part of the high-affinity ATP-driven potassium transport (or Kdp) system, which catalyzes the hydrolysis of ATP coupled with the electrogenic transport of potassium into the cytoplasm. This subunit binds the extracellular potassium ions and delivers the ions to the membrane domain of KdpB through an intramembrane tunnel. This chain is Potassium-transporting ATPase potassium-binding subunit, found in Rhodococcus jostii (strain RHA1).